Here is a 227-residue protein sequence, read N- to C-terminus: Mitochondrial cardiolipin hydrolase (227 aa).

Residues 1–14 are Mitochondrial intermembrane-facing; it reads MDVFKQMSFKELMK. Residues 15 to 33 traverse the membrane as a helical segment; it reads VLGLGTVAFVLGVEWLNWL. Residues 34–227 lie on the Cytoplasmic side of the membrane; that stretch reads TRRLRDSRGP…LQSKNGQIKK (194 aa). The PLD phosphodiesterase domain occupies 153–180; the sequence is SAVHMHHKFALVDGRKLISGSLNWTLTA. Active-site residues include His158, Lys160, and Asp165.

Belongs to the phospholipase D family. MitoPLD/Zucchini subfamily. In terms of assembly, homodimer.

It localises to the mitochondrion outer membrane. The enzyme catalyses a cardiolipin + H2O = a 1,2-diacyl-sn-glycero-3-phospho-(1'-sn-glycerol) + a 1,2-diacyl-sn-glycero-3-phosphate + H(+). In terms of biological role, presents phospholipase and nuclease activities, depending on the different physiological conditions. Plays a key role in mitochondrial fusion and fission via its phospholipase activity. In its phospholipase role, it uses the mitochondrial lipid cardiolipin as substrate to generate phosphatidate (PA or 1,2-diacyl-sn-glycero-3-phosphate), a second messenger signaling lipid. Production of PA facilitates Mitofusin-mediated fusion, whereas the cleavage of PA by the Lipin family of phosphatases produces diacylgycerol (DAG) which promotes mitochondrial fission. Regulates mitochondrial shape through facilitating mitochondrial fusion. During spermatogenesis, plays a critical role in PIWI-interacting RNA (piRNA) biogenesis. piRNAs provide essential protection against the activity of mobile genetic elements. piRNA-mediated transposon silencing is thus critical for maintaining genome stability, in particular in germline cells when transposons are mobilized as a consequence of wide-spread genomic demethylation. Has been shown to be a backbone-non-specific, single strand-specific nuclease, cleaving either RNA or DNA substrates with similar affinity. Produces 5' phosphate and 3' hydroxyl termini, suggesting it could directly participate in the processing of primary piRNA transcripts. Has been proposed to act as a cardiolipin hydrolase to generate phosphatidic acid at mitochondrial surface. Although it cannot be excluded that it can act as a phospholipase in some circumstances, this activity could not be confirmed. In Danio rerio (Zebrafish), this protein is Mitochondrial cardiolipin hydrolase (pld6).